We begin with the raw amino-acid sequence, 115 residues long: Transcriptional regulator protein FixT (115 aa).

As to quaternary structure, interacts directly with FixL.

In terms of biological role, prevents transcription of the intermediate key regulatory genes nifA and fixK by counteracting the activity of the FixLJ two-component system. Acts as an inhibitor of the sensor hemoprotein kinase fixL, preventing the production or the accumulation of its phosphorylated form. This Rhizobium meliloti (strain 1021) (Ensifer meliloti) protein is Transcriptional regulator protein FixT (fixT).